Reading from the N-terminus, the 61-residue chain is Small ribosomal subunit protein uS14 (61 aa).

Residues Cys24, Cys27, Cys40, and Cys43 each coordinate Zn(2+).

Belongs to the universal ribosomal protein uS14 family. Zinc-binding uS14 subfamily. In terms of assembly, part of the 30S ribosomal subunit. Contacts proteins S3 and S10. The cofactor is Zn(2+).

Binds 16S rRNA, required for the assembly of 30S particles and may also be responsible for determining the conformation of the 16S rRNA at the A site. The chain is Small ribosomal subunit protein uS14 from Thermus thermophilus (strain ATCC BAA-163 / DSM 7039 / HB27).